The following is a 920-amino-acid chain: 3-hydroxy-3-methylglutaryl-coenzyme A reductase (920 aa).

The helical transmembrane segment at 12-32 (FCASHPWEVIVALLTITACML) threads the bilayer. Residue asparagine 37 is glycosylated (N-linked (GlcNAc...) asparagine). The interval 62–85 (GAGSGASGTIPPSSMGGSATSSRH) is disordered. Positions 71–82 (IPPSSMGGSATS) are enriched in polar residues. Positions 106–263 (DVILMTIVRC…MTFYPACLSL (158 aa)) constitute an SSD domain. 5 consecutive transmembrane segments (helical) span residues 107-129 (VILMTIVRCTAVLYCYYQFCSLH), 136-156 (VLGIAGLFTVFSSFIFTTAII), 170-190 (LFFLLLVIDLSNSGRLAQLAL), 208-228 (LLGPAISLDTIVEVLLVGVGT), and 237-257 (VLCMFAVLSVLVNYVVFMTFY). N-linked (GlcNAc...) asparagine glycans are attached at residues asparagine 342 and asparagine 346. A helical membrane pass occupies residues 364-384 (SADHIVISIVLIALVVKFICF). The tract at residues 385-498 (DNRDPLPDQL…EEIVSIVHAG (114 aa)) is linker. 2 N-linked (GlcNAc...) asparagine glycosylation sites follow: asparagine 443 and asparagine 475. The segment at 499-829 (GTHCPLHKIE…TCTMPSLEVG (331 aa)) is catalytic. Catalysis depends on charge relay system residues glutamate 586, lysine 717, and aspartate 793. Asparagine 797 and asparagine 802 each carry an N-linked (GlcNAc...) asparagine glycan. Histidine 892 functions as the Proton donor in the catalytic mechanism. Asparagine 896 and asparagine 910 each carry an N-linked (GlcNAc...) asparagine glycan.

It belongs to the HMG-CoA reductase family. In terms of tissue distribution, highly expressed in embryonic gonadal mesoderm, where expression is initially broad, and then becomes restricted to a segmental pattern at stage 11. Expression is then further restricted to a cluster of cells in each of parasegments 10, 11 and 12, corresponding to the developing gonadal mesoderm. Not expressed in pole cells.

It localises to the endoplasmic reticulum membrane. It carries out the reaction (R)-mevalonate + 2 NADP(+) + CoA = (3S)-3-hydroxy-3-methylglutaryl-CoA + 2 NADPH + 2 H(+). It participates in metabolic intermediate biosynthesis; (R)-mevalonate biosynthesis; (R)-mevalonate from acetyl-CoA: step 3/3. Its activity is regulated as follows. The activity of HMG-CoA-reductase is suppressed by exogenous mevalonate. Synthesis of mevalonate for the production of non-sterol isoprenoids, which are essential for growth differentiation. Provides spatial information during embryogenesis to guide migrating primordial germ cells (the pole cells) from the ectoderm to the mesoderm. Also required for association of the pole cells with the gonadal mesoderm. This chain is 3-hydroxy-3-methylglutaryl-coenzyme A reductase (Hmgcr), found in Drosophila melanogaster (Fruit fly).